Consider the following 37-residue polypeptide: Large ribosomal subunit protein bL36c (37 aa).

It belongs to the bacterial ribosomal protein bL36 family.

It is found in the plastid. The protein resides in the chloroplast. This chain is Large ribosomal subunit protein bL36c, found in Piper cenocladum (Ant piper).